A 77-amino-acid chain; its full sequence is uncharacterized protein (77 aa).

This is an uncharacterized protein from Saccharomyces cerevisiae (strain ATCC 204508 / S288c) (Baker's yeast).